A 254-amino-acid polypeptide reads, in one-letter code: Tubulin-specific chaperone B (254 aa).

Positions 182 to 225 (PLPLDVMGTWCGVEFPEAAGKNDGRINGVTLFGPVAPGHGSFVR) constitute a CAP-Gly domain. Positions 234–254 (KDEESAEVEDVHDDVESDDEI) are disordered. Residues 237-254 (ESAEVEDVHDDVESDDEI) show a composition bias toward acidic residues.

The protein belongs to the TBCB family. Binds to monomeric alpha-tubulin.

The protein resides in the cytoplasm. Its subcellular location is the cytoskeleton. Functionally, acts to sequester alpha-tubulin from interaction with beta-tubulin, raising the possibility that it plays a regulatory role in the formation of the tubulin heterodimer. The polypeptide is Tubulin-specific chaperone B (ALF1) (Saccharomyces cerevisiae (strain ATCC 204508 / S288c) (Baker's yeast)).